A 415-amino-acid polypeptide reads, in one-letter code: Dynein assembly factor with WD repeat domains 1 (415 aa).

8 WD repeats span residues 90-129 (AHIL…ELNT), 132-174 (GHRN…HTFR), 175-214 (GHTA…EVCT), 217-256 (GHSA…KVNI), 259-298 (GHCA…CVAT), 301-340 (GHDD…CIAK), 343-384 (GHEG…QVLE), and 386-415 (HTDE…RIWR).

Belongs to the WD repeat WDR69 family. Interacts with IFT46.

It localises to the cytoplasm. The protein resides in the cytoskeleton. The protein localises to the flagellum basal body. It is found in the flagellum axoneme. Its function is as follows. Required for axonemal dynein assembly and ciliary motility in ciliated organs, including Kupffer's vesicle, during embryogenesis. Facilitates the onset of robust cilia motility during development. This is Dynein assembly factor with WD repeat domains 1 (DAW1) from Macaca fascicularis (Crab-eating macaque).